A 489-amino-acid chain; its full sequence is Ubiquitin carboxyl-terminal hydrolase 14 (489 aa).

In terms of domain architecture, USP spans 102-458 (CGLANLGNTC…SAYVLLYEAR (357 aa)). Cys111 acts as the Nucleophile in catalysis. His409 (proton acceptor) is an active-site residue. Positions 467 to 489 (PPAPVPTEVAADTAEPMEVSEKQ) are disordered.

It belongs to the peptidase C19 family. USP14/UBP6 subfamily.

It carries out the reaction Thiol-dependent hydrolysis of ester, thioester, amide, peptide and isopeptide bonds formed by the C-terminal Gly of ubiquitin (a 76-residue protein attached to proteins as an intracellular targeting signal).. Proteasome-associated deubiquitinase which releases ubiquitin from the proteasome targeted ubiquitinated proteins. Ensures the regeneration of ubiquitin at the proteasome. The protein is Ubiquitin carboxyl-terminal hydrolase 14 (usp-14) of Caenorhabditis elegans.